Consider the following 164-residue polypeptide: NADH-quinone oxidoreductase subunit I (164 aa).

2 4Fe-4S ferredoxin-type domains span residues 55-85 (LRRY…IDAE) and 95-124 (TRYD…EGPN). Cys-65, Cys-68, Cys-71, Cys-75, Cys-104, Cys-107, Cys-110, and Cys-114 together coordinate [4Fe-4S] cluster.

The protein belongs to the complex I 23 kDa subunit family. NDH-1 is composed of 14 different subunits. Subunits NuoA, H, J, K, L, M, N constitute the membrane sector of the complex. Requires [4Fe-4S] cluster as cofactor.

It is found in the cell inner membrane. The enzyme catalyses a quinone + NADH + 5 H(+)(in) = a quinol + NAD(+) + 4 H(+)(out). Functionally, NDH-1 shuttles electrons from NADH, via FMN and iron-sulfur (Fe-S) centers, to quinones in the respiratory chain. The immediate electron acceptor for the enzyme in this species is believed to be ubiquinone. Couples the redox reaction to proton translocation (for every two electrons transferred, four hydrogen ions are translocated across the cytoplasmic membrane), and thus conserves the redox energy in a proton gradient. This is NADH-quinone oxidoreductase subunit I from Dinoroseobacter shibae (strain DSM 16493 / NCIMB 14021 / DFL 12).